A 492-amino-acid polypeptide reads, in one-letter code: Glycerol kinase 1 (492 aa).

Residue Thr-10 participates in ADP binding. The ATP site is built by Thr-10 and Ser-11. Thr-10 serves as a coordination point for sn-glycerol 3-phosphate. Lys-14 provides a ligand contact to ADP. The sn-glycerol 3-phosphate site is built by Arg-80, Glu-81, Tyr-132, and Asp-241. 4 residues coordinate glycerol: Arg-80, Glu-81, Tyr-132, and Asp-241. Residues Thr-263, Gly-306, Gly-407, and Asn-411 each contribute to the ADP site. Residues Thr-263, Gly-306, and Gly-407 each contribute to the ATP site.

It belongs to the FGGY kinase family.

It catalyses the reaction glycerol + ATP = sn-glycerol 3-phosphate + ADP + H(+). It participates in polyol metabolism; glycerol degradation via glycerol kinase pathway; sn-glycerol 3-phosphate from glycerol: step 1/1. Its activity is regulated as follows. Inhibited by fructose 1,6-bisphosphate (FBP). Functionally, key enzyme in the regulation of glycerol uptake and metabolism. Catalyzes the phosphorylation of glycerol to yield sn-glycerol 3-phosphate. In Thermotoga maritima (strain ATCC 43589 / DSM 3109 / JCM 10099 / NBRC 100826 / MSB8), this protein is Glycerol kinase 1.